The primary structure comprises 258 residues: MEMDSHNAKPLRILLSNDDGVHAQGIHALADELRSIAEVTIVAPDRNRSGASNSLTLEQPLRVTEIAPKTFSVQGTPTDCVHFALNELMKDDLPDLVLSGINHGANLGDDVLYSGTVAAAMEGHFLGVQAIAFSLVGKQHFESAAKIARQLVEQHLIRPIPTNRLLNVNVPDLPFEELGEIEVTRLGARHHAENMIKQRDPRGHDIYWLGPPGKEQDAGIGTDFYAIEHGFVSITPLQVDLTAHESLRAMDSWLKEEN.

A divalent metal cation-binding residues include aspartate 18, aspartate 19, serine 49, and asparagine 102.

Belongs to the SurE nucleotidase family. A divalent metal cation serves as cofactor.

It is found in the cytoplasm. The enzyme catalyses a ribonucleoside 5'-phosphate + H2O = a ribonucleoside + phosphate. In terms of biological role, nucleotidase that shows phosphatase activity on nucleoside 5'-monophosphates. This Vibrio campbellii (strain ATCC BAA-1116) protein is 5'-nucleotidase SurE.